The primary structure comprises 177 residues: Probable DNA-directed RNA polymerase subunit delta (177 aa).

An HTH HARE-type domain is found at 14 to 81 (CSMIEVVHSV…GENRWGLRSW (68 aa)). The disordered stretch occupies residues 93-177 (PQPKPKKKRK…ETEEEEEEEL (85 aa)). The span at 106–177 (DGFDDYIEED…ETEEEEEEEL (72 aa)) shows a compositional bias: acidic residues.

Belongs to the RpoE family. In terms of assembly, RNAP is composed of a core of 2 alpha, a beta and a beta' subunits. The core is associated with a delta subunit and one of several sigma factors.

Participates in both the initiation and recycling phases of transcription. In the presence of the delta subunit, RNAP displays an increased specificity of transcription, a decreased affinity for nucleic acids, and an increased efficiency of RNA synthesis because of enhanced recycling. This is Probable DNA-directed RNA polymerase subunit delta from Bacillus cereus (strain AH187).